The sequence spans 338 residues: Starch-binding domain-containing protein 1 (338 aa).

The Extracellular portion of the chain corresponds to 1 to 6; that stretch reads MGAVWS. Residues 7–23 traverse the membrane as a helical segment; the sequence is ALLVGGGLAGALILWLL. The Cytoplasmic segment spans residues 24 to 338; that stretch reads RGDSGAPGKD…KVVHGWWGIH (315 aa). 2 disordered regions span residues 30–73 and 120–148; these read PGKD…RELV and KIPD…WRLP. The span at 36-52 shows a compositional bias: low complexity; it reads AEPPQKGAPPGEAAAPG. Gly residues predominate over residues 53-62; the sequence is DGPGGGGSGG. Position 68 is a phosphoserine (Ser-68). A compositionally biased stretch (basic and acidic residues) spans 122–132; sequence PDTHSRADSEA. Phosphoserine occurs at positions 140, 167, and 179. The short motif at 185–191 is the LIR element; it reads HEDWEVV. Phosphoserine is present on residues Ser-195, Ser-196, Ser-205, Ser-209, Ser-212, Ser-220, and Ser-223. Residues 238 to 337 form the CBM20 domain; the sequence is SLKPQQVSIQ…DKVVHGWWGI (100 aa).

In terms of assembly, interacts with the ATG8 family proteins GABARAP and GABARAPL1. Interacts with several glycogen-associated proteins, such as GYS2 (liver glycogen synthase), GDE (glycogen debranching enzyme), GBE1 (glycogen branching enzyme 1) and EPM2A (Laforin). Ubiquitinated, which leads to proteasomal degradation. In terms of tissue distribution, expressed at high level in glycogen-accumulating organs such as muscle and liver. Trace signals are also found in brain, kidney, and pancreas.

The protein localises to the preautophagosomal structure membrane. Its subcellular location is the endoplasmic reticulum membrane. The protein resides in the cell membrane. It localises to the sarcolemma. It is found in the T-tubule. Its function is as follows. Acts as a cargo receptor for glycogen. Delivers its cargo to an autophagic pathway called glycophagy, resulting in the transport of glycogen to lysosomes. This is Starch-binding domain-containing protein 1 from Mus musculus (Mouse).